A 749-amino-acid chain; its full sequence is Protein O-mannosyl-transferase 2 (749 aa).

The disordered stretch occupies residues 1 to 30 (MAASVVKTPKCPRRGSAKEQQSKASPKSNN). The chain crosses the membrane as a helical span at residues 34-54 (NWHWWILLASVFLITFATRFY). N-linked (GlcNAc...) asparagine glycans are attached at residues Asn-78, Asn-104, and Asn-117. The next 5 helical transmembrane spans lie at 126–146 (YFCTTLGALIMPMGFDTVYDL), 173–193 (ILLDPILLFFMMGSVWGMVKI), 204–224 (SVRWWFWLFLTGTMLSCTISV), 226–246 (FVGLFVVLLVGLHTATELWLI), and 266–286 (IALILWPILLYTLFFYIHLSV). N-linked (GlcNAc...) asparagine glycans are attached at residues Asn-288 and Asn-312. MIR domains are found at residues 316-372 (PRDV…IKPH), 382-438 (LQLL…VLIV), and 443-499 (NETV…VEDN). Residue Asn-443 is glycosylated (N-linked (GlcNAc...) asparagine). 4 consecutive transmembrane segments (helical) span residues 572–592 (IWWSNLVFLALFVAVFLGNAI), 645–665 (LGAAAWLFVGWLLHYLPFWAM), 669–689 (LYFHHYFPALIFNSLLTGVMF), and 703–723 (VLLGGLLSLIVYSFALFSPLA). Asn-735 carries N-linked (GlcNAc...) asparagine glycosylation.

Belongs to the glycosyltransferase 39 family. As to quaternary structure, interacts with Rt/POMT1.

The protein localises to the endoplasmic reticulum membrane. It catalyses the reaction a di-trans,poly-cis-dolichyl beta-D-mannosyl phosphate + L-seryl-[protein] = 3-O-(alpha-D-mannosyl)-L-seryl-[protein] + a di-trans,poly-cis-dolichyl phosphate + H(+). The enzyme catalyses a di-trans,poly-cis-dolichyl beta-D-mannosyl phosphate + L-threonyl-[protein] = 3-O-(alpha-D-mannosyl)-L-threonyl-[protein] + a di-trans,poly-cis-dolichyl phosphate + H(+). Its pathway is protein modification; protein glycosylation. Rt/POMT1 and tw/POMT2 function as a protein O-mannosyltransferase in association with each other to generate and maintain normal muscle development. This is Protein O-mannosyl-transferase 2 from Drosophila pseudoobscura pseudoobscura (Fruit fly).